The chain runs to 285 residues: Vacuolar protein sorting-associated protein 37B (285 aa).

An interaction with IST1 region spans residues 50–170; it reads ASNRSLAEGN…EMVLKGQRLP (121 aa). The VPS37 C-terminal domain occupies 84–173; it reads FEAYQIKKTK…LKGQRLPQAL (90 aa). The disordered stretch occupies residues 175–201; that stretch reads PLPPRLPELAPTAPLPYPAPEASGPPA. R218 is modified (omega-N-methylarginine). The interval 230-285 is disordered; the sequence is GQAVPYPGLQCPPLPPRVGLPTQQGFSSQFVSPYPPPLPQRPPPRLPPHQPGFILQ. Residues 250–260 show a composition bias toward polar residues; the sequence is PTQQGFSSQFV. Pro residues predominate over residues 262-279; that stretch reads PYPPPLPQRPPPRLPPHQ.

This sequence belongs to the VPS37 family. In terms of assembly, component of the ESCRT-I complex (endosomal sorting complex required for transport I) which consists of TSG101, VPS28, a VPS37 protein (VPS37A to -D) and MVB12A or MVB12B in a 1:1:1:1 stoichiometry. Interacts with TSG101, VPS28, MVB12A and MVB12B. Component of the ESCRT-I complex (endosomal sorting complex required for transport I) which consists of TSG101, VPS28, a VPS37 protein (VPS37A to -D) and UBAP1 in a 1:1:1:1 stoichiometry. Interacts with CEP55. Interacts with IST1. Widely expressed. Expressed in macrophages and lymphocytes.

It is found in the late endosome membrane. Component of the ESCRT-I complex, a regulator of vesicular trafficking process. Required for the sorting of endocytic ubiquitinated cargos into multivesicular bodies. May be involved in cell growth and differentiation. The chain is Vacuolar protein sorting-associated protein 37B (VPS37B) from Homo sapiens (Human).